Consider the following 320-residue polypeptide: Ferrochelatase (320 aa).

Fe cation-binding residues include His-194 and Glu-275.

It belongs to the ferrochelatase family. As to quaternary structure, monomer.

The protein resides in the cytoplasm. It carries out the reaction heme b + 2 H(+) = protoporphyrin IX + Fe(2+). It functions in the pathway porphyrin-containing compound metabolism; protoheme biosynthesis; protoheme from protoporphyrin-IX: step 1/1. In terms of biological role, catalyzes the ferrous insertion into protoporphyrin IX. This is Ferrochelatase from Escherichia coli O157:H7 (strain EC4115 / EHEC).